A 552-amino-acid chain; its full sequence is Chaperonin GroEL 3 (552 aa).

Residues 30–33 (TLGP), K51, 87–91 (DGTTT), G415, and D495 each bind ATP.

The protein belongs to the chaperonin (HSP60) family. In terms of assembly, forms a cylinder of 14 subunits composed of two heptameric rings stacked back-to-back. Interacts with the co-chaperonin GroES.

The protein localises to the cytoplasm. It catalyses the reaction ATP + H2O + a folded polypeptide = ADP + phosphate + an unfolded polypeptide.. Its function is as follows. Together with its co-chaperonin GroES, plays an essential role in assisting protein folding. The GroEL-GroES system forms a nano-cage that allows encapsulation of the non-native substrate proteins and provides a physical environment optimized to promote and accelerate protein folding. The sequence is that of Chaperonin GroEL 3 from Mesorhizobium japonicum (strain LMG 29417 / CECT 9101 / MAFF 303099) (Mesorhizobium loti (strain MAFF 303099)).